Here is a 221-residue protein sequence, read N- to C-terminus: UPF0502 protein PA14_19450 (221 aa).

The protein belongs to the UPF0502 family.

This Pseudomonas aeruginosa (strain UCBPP-PA14) protein is UPF0502 protein PA14_19450.